The primary structure comprises 248 residues: Regulator of G-protein signaling 7-binding protein A (248 aa).

Residues 1–32 are disordered; that stretch reads MSSAPNGRKNRPRTAGTIFQIGGKAPSRESER. Residues C243 and C244 are each lipidated (S-palmitoyl cysteine).

The protein belongs to the RGS7BP/RGS9BP family. Palmitoylated. Undergoes rapid palmitoylation turnover. Palmitoylation regulates the cell membrane and nuclear shuttling and the regulation of GPCR signaling. Upon depalmitoylation, it is targeted from the plasma membrane into the nucleus. GPCR signaling inhibits depalmitoylation and promotes localization to the plasma membrane.

It is found in the nucleus. It localises to the cytoplasm. Its subcellular location is the cell membrane. Its function is as follows. Regulator of G protein-coupled receptor (GPCR) signaling. Regulatory subunit of the R7-Gbeta5 complexes that acts by controlling the subcellular location of the R7-Gbeta5 complexes. When palmitoylated, it targets the R7-Gbeta5 complexes to the plasma membrane, leading to inhibit G protein alpha subunits. When it is unpalmitoylated, the R7-Gbeta5 complexes undergo a nuclear/cytoplasmic shuttling. This chain is Regulator of G-protein signaling 7-binding protein A (rgs7bpa), found in Danio rerio (Zebrafish).